We begin with the raw amino-acid sequence, 458 residues long: Argininosuccinate lyase (458 aa).

This sequence belongs to the lyase 1 family. Argininosuccinate lyase subfamily.

It is found in the cytoplasm. The catalysed reaction is 2-(N(omega)-L-arginino)succinate = fumarate + L-arginine. It functions in the pathway amino-acid biosynthesis; L-arginine biosynthesis; L-arginine from L-ornithine and carbamoyl phosphate: step 3/3. The chain is Argininosuccinate lyase from Hydrogenobaculum sp. (strain Y04AAS1).